Consider the following 403-residue polypeptide: S-adenosylmethionine synthase (403 aa).

His17 is an ATP binding site. Asp19 contacts Mg(2+). Glu45 provides a ligand contact to K(+). L-methionine-binding residues include Glu58 and Gln104. Residues 104–114 (QSPDIAQGVDT) form a flexible loop region. ATP is bound by residues 179–181 (DGK), 250–251 (KF), Asp259, 265–266 (RK), Ala282, and Lys286. Residue Asp259 participates in L-methionine binding. L-methionine is bound at residue Lys290.

It belongs to the AdoMet synthase family. As to quaternary structure, homotetramer; dimer of dimers. Mg(2+) is required as a cofactor. It depends on K(+) as a cofactor.

It localises to the cytoplasm. It catalyses the reaction L-methionine + ATP + H2O = S-adenosyl-L-methionine + phosphate + diphosphate. It functions in the pathway amino-acid biosynthesis; S-adenosyl-L-methionine biosynthesis; S-adenosyl-L-methionine from L-methionine: step 1/1. In terms of biological role, catalyzes the formation of S-adenosylmethionine (AdoMet) from methionine and ATP. The overall synthetic reaction is composed of two sequential steps, AdoMet formation and the subsequent tripolyphosphate hydrolysis which occurs prior to release of AdoMet from the enzyme. The sequence is that of S-adenosylmethionine synthase from Mycobacterium marinum (strain ATCC BAA-535 / M).